A 157-amino-acid chain; its full sequence is Transcription elongation factor GreA (157 aa).

Residues 13–75 (RARLEAELEE…EIKSILARAQ (63 aa)) adopt a coiled-coil conformation. Residues 113-142 (EAKPSEGKISNESPIGSALLGKRPRQKVTV) form a disordered region.

It belongs to the GreA/GreB family.

Its function is as follows. Necessary for efficient RNA polymerase transcription elongation past template-encoded arresting sites. The arresting sites in DNA have the property of trapping a certain fraction of elongating RNA polymerases that pass through, resulting in locked ternary complexes. Cleavage of the nascent transcript by cleavage factors such as GreA or GreB allows the resumption of elongation from the new 3'terminus. GreA releases sequences of 2 to 3 nucleotides. This Roseiflexus sp. (strain RS-1) protein is Transcription elongation factor GreA.